The chain runs to 361 residues: Chorismate synthase (361 aa).

NADP(+) contacts are provided by arginine 48 and arginine 54. FMN is bound by residues 125–127 (RSS), 238–239 (NA), glycine 278, 293–297 (KPTSS), and arginine 319.

This sequence belongs to the chorismate synthase family. Homotetramer. FMNH2 is required as a cofactor.

The enzyme catalyses 5-O-(1-carboxyvinyl)-3-phosphoshikimate = chorismate + phosphate. It functions in the pathway metabolic intermediate biosynthesis; chorismate biosynthesis; chorismate from D-erythrose 4-phosphate and phosphoenolpyruvate: step 7/7. In terms of biological role, catalyzes the anti-1,4-elimination of the C-3 phosphate and the C-6 proR hydrogen from 5-enolpyruvylshikimate-3-phosphate (EPSP) to yield chorismate, which is the branch point compound that serves as the starting substrate for the three terminal pathways of aromatic amino acid biosynthesis. This reaction introduces a second double bond into the aromatic ring system. The protein is Chorismate synthase of Proteus mirabilis (strain HI4320).